A 161-amino-acid chain; its full sequence is Phosphopantetheine adenylyltransferase (161 aa).

A substrate-binding site is contributed by T10. ATP is bound by residues 10–11 (TF) and H18. Positions 42, 74, and 88 each coordinate substrate. ATP-binding positions include 89-91 (GLR), E99, and 124-130 (NAFISSS).

It belongs to the bacterial CoaD family. Homohexamer. Mg(2+) is required as a cofactor.

The protein resides in the cytoplasm. The catalysed reaction is (R)-4'-phosphopantetheine + ATP + H(+) = 3'-dephospho-CoA + diphosphate. It participates in cofactor biosynthesis; coenzyme A biosynthesis; CoA from (R)-pantothenate: step 4/5. Functionally, reversibly transfers an adenylyl group from ATP to 4'-phosphopantetheine, yielding dephospho-CoA (dPCoA) and pyrophosphate. The protein is Phosphopantetheine adenylyltransferase of Wolinella succinogenes (strain ATCC 29543 / DSM 1740 / CCUG 13145 / JCM 31913 / LMG 7466 / NCTC 11488 / FDC 602W) (Vibrio succinogenes).